Reading from the N-terminus, the 157-residue chain is Protein Smg homolog (157 aa).

It belongs to the Smg family.

This chain is Protein Smg homolog, found in Shewanella piezotolerans (strain WP3 / JCM 13877).